Reading from the N-terminus, the 366-residue chain is Probable methyltransferase-like protein 24 (366 aa).

An N-terminal signal peptide occupies residues 1-29 (MARERPPGRGCGVLRRCLLGAVLLFGLRL). A disordered region spans residues 36-110 (AGPGSPTRSA…GRPRRKGPRW (75 aa)). Residues 44–63 (SAPPGPAWRPPGPHLPPAPG) are compositionally biased toward pro residues. Low complexity predominate over residues 91–100 (TPEPGCCAPR).

It belongs to the methyltransferase superfamily.

The protein localises to the secreted. Probable methyltransferase. The chain is Probable methyltransferase-like protein 24 (METTL24) from Homo sapiens (Human).